We begin with the raw amino-acid sequence, 45 residues long: EVDRYWVVLAALEALADRGDIEAKVVAEAIAKFGIDPDKRNPLDC.

Homodimer. Thiamine diphosphate is required as a cofactor.

The catalysed reaction is N(6)-[(R)-lipoyl]-L-lysyl-[protein] + pyruvate + H(+) = N(6)-[(R)-S(8)-acetyldihydrolipoyl]-L-lysyl-[protein] + CO2. Functionally, the pyruvate dehydrogenase complex catalyzes the overall conversion of pyruvate to acetyl-CoA and CO(2). It contains multiple copies of three enzymatic components: pyruvate dehydrogenase (E1), dihydrolipoamide acetyltransferase (E2) and lipoamide dehydrogenase (E3). This is Pyruvate dehydrogenase E1 component from Azotobacter vinelandii.